The primary structure comprises 399 residues: Chorismate synthase (399 aa).

Residues arginine 40 and arginine 46 each coordinate NADP(+). FMN is bound by residues 134–136 (RAS), 255–256 (QA), glycine 299, 314–318 (KPIST), and arginine 340.

This sequence belongs to the chorismate synthase family. Homotetramer. FMNH2 serves as cofactor.

It carries out the reaction 5-O-(1-carboxyvinyl)-3-phosphoshikimate = chorismate + phosphate. It functions in the pathway metabolic intermediate biosynthesis; chorismate biosynthesis; chorismate from D-erythrose 4-phosphate and phosphoenolpyruvate: step 7/7. Catalyzes the anti-1,4-elimination of the C-3 phosphate and the C-6 proR hydrogen from 5-enolpyruvylshikimate-3-phosphate (EPSP) to yield chorismate, which is the branch point compound that serves as the starting substrate for the three terminal pathways of aromatic amino acid biosynthesis. This reaction introduces a second double bond into the aromatic ring system. This Mycolicibacterium smegmatis (strain ATCC 700084 / mc(2)155) (Mycobacterium smegmatis) protein is Chorismate synthase.